A 102-amino-acid polypeptide reads, in one-letter code: Small ribosomal subunit protein uS10 (102 aa).

Belongs to the universal ribosomal protein uS10 family. Part of the 30S ribosomal subunit.

In terms of biological role, involved in the binding of tRNA to the ribosomes. The chain is Small ribosomal subunit protein uS10 from Leptospira biflexa serovar Patoc (strain Patoc 1 / Ames).